Here is a 642-residue protein sequence, read N- to C-terminus: Threonine--tRNA ligase (642 aa).

The 61-residue stretch at 1-61 (MPIITLPDGS…EHDASLEIIT (61 aa)) folds into the TGS domain. The catalytic stretch occupies residues 244–535 (DHRKIGKQLD…LIEEYAGFFP (292 aa)). Positions 335, 386, and 512 each coordinate Zn(2+).

Belongs to the class-II aminoacyl-tRNA synthetase family. As to quaternary structure, homodimer. Requires Zn(2+) as cofactor.

It is found in the cytoplasm. The enzyme catalyses tRNA(Thr) + L-threonine + ATP = L-threonyl-tRNA(Thr) + AMP + diphosphate + H(+). Its function is as follows. Catalyzes the attachment of threonine to tRNA(Thr) in a two-step reaction: L-threonine is first activated by ATP to form Thr-AMP and then transferred to the acceptor end of tRNA(Thr). Also edits incorrectly charged L-seryl-tRNA(Thr). The polypeptide is Threonine--tRNA ligase (Vibrio cholerae serotype O1 (strain ATCC 39541 / Classical Ogawa 395 / O395)).